Reading from the N-terminus, the 546-residue chain is MYKHRYFHFFFFFFFFLVSTKIIRSFTFLNNNTNLSNPVYFKKKANMVYDLIVIGGGSGGMAAARRAARHNAKVALVEKSRLGGTCVNVGCVPKKIMFNAASVHDILENSRHYGFDTKFSFNLPLLVERRDKYIQRLNNIYRQNLSKDKVDLYEGTASFLSENRILIKGTKDNNNKDNGPLNEEILEGRNILIAVGNKPVFPPVKGIENTISSDEFFNIKESKKIGIVGSGYIAVELINVIKRLGIDSYIFARGNRILRKFDESVINVLENDMKKNNINIVTFADVVEIKKVSDKNLSIHLSDGRIYEHFDHVIYCVGRSPDTENLNLEKLNVETNNNYIVVDENQRTSVNNIYAVGDCCMVKKSKEIEDLNLLKLYNEETYLNKKENVTEDIFYNVQLTPVAINAGRLLADRLFLKKTRKTNYKLIPTVIFSHPPIGTIGLSEEAAIQIYGKENVKIYESKFTNLFFSVYDIEPELKEKTYLKLVCVGKDELIKGLHIIGLNADEIVQGFAVALKMNATKKDFDETIPIHPTAAEEFLTLQPWMK.

The transit peptide at 2 to 46 (YKHRYFHFFFFFFFFLVSTKIIRSFTFLNNNTNLSNPVYFKKKAN) directs the protein to the apicoplast. Residues S58 and G59 each contribute to the FAD site. Residue S58 coordinates glutathione. R65 is a glutathione binding site. Residues E78, T85, C86, and K94 each coordinate FAD. C86 and C91 are joined by a disulfide. Position 141 (Y141) interacts with glutathione. A157 contacts FAD. The NADP(+) site is built by I233, E236, R253, R259, and G318. FAD is bound by residues D358 and T400. R408 provides a ligand contact to glutathione. V430 is a binding site for NADP(+). Residue H531 participates in FAD binding. H531 functions as the Proton acceptor in the catalytic mechanism.

It belongs to the class-I pyridine nucleotide-disulfide oxidoreductase family. As to quaternary structure, homodimer. Requires FAD as cofactor.

It localises to the cytoplasm. The protein localises to the plastid. It is found in the apicoplast. It catalyses the reaction 2 glutathione + NADP(+) = glutathione disulfide + NADPH + H(+). Catalyzes the reduction of glutathione disulfide (GSSG) to reduced glutathione (GSH). Constitutes the major mechanism to maintain a high GSH:GSSG ratio in the cytosol. The protein is Glutathione reductase of Plasmodium falciparum (isolate 3D7).